The chain runs to 433 residues: Dihydroorotase (433 aa).

The Zn(2+) site is built by His-63 and His-65. Residues 65-67 (HLR) and Asn-97 contribute to the substrate site. 3 residues coordinate Zn(2+): Asp-155, His-182, and His-235. Residue Asn-283 participates in substrate binding. Asp-310 serves as a coordination point for Zn(2+). The active site involves Asp-310. His-314 contributes to the substrate binding site.

This sequence belongs to the metallo-dependent hydrolases superfamily. DHOase family. Class I DHOase subfamily. Zn(2+) serves as cofactor.

The catalysed reaction is (S)-dihydroorotate + H2O = N-carbamoyl-L-aspartate + H(+). It functions in the pathway pyrimidine metabolism; UMP biosynthesis via de novo pathway; (S)-dihydroorotate from bicarbonate: step 3/3. Its function is as follows. Catalyzes the reversible cyclization of carbamoyl aspartate to dihydroorotate. This is Dihydroorotase from Anaeromyxobacter sp. (strain K).